A 330-amino-acid polypeptide reads, in one-letter code: G-protein coupled receptor 3 (330 aa).

Topologically, residues 1-42 are extracellular; sequence MMWGAGSPLAWLSAGSGNVNVSSVGPAEGPTGPAAPLPSPKA. N-linked (GlcNAc...) asparagine glycosylation occurs at Asn-20. The helical transmembrane segment at 43 to 62 threads the bilayer; that stretch reads WDVVLCISGTLVSCENALVV. Topologically, residues 63 to 74 are cytoplasmic; the sequence is AIIVGTPAFRAP. A helical transmembrane segment spans residues 75-98; that stretch reads MFLLVGSLAVADLLAGLGLVLHFA. Residues 99-110 are Extracellular-facing; the sequence is AVFCIGSAEMSL. A helical transmembrane segment spans residues 111 to 132; that stretch reads VLVGVLAMAFTASIGSLLAITV. Residues 133 to 153 are Cytoplasmic-facing; it reads DRYLSLYNALTYYSETTVTRT. A helical membrane pass occupies residues 154–173; the sequence is YVMLALVWGGALGLGLLPVL. Residues 174–198 are Extracellular-facing; the sequence is AWNCLDGLTTCGVVYPLSKNHLVVL. Residues 199–217 form a helical membrane-spanning segment; it reads AIAFFMVFGIMLQLYAQIC. Residues 218–245 are Cytoplasmic-facing; that stretch reads RIVCRHAQQIALQRHLLPASHYVATRKG. Residues 246–272 form a helical membrane-spanning segment; sequence IATLAVVLGAFAACWLPFTVYCLLGDA. The Extracellular segment spans residues 273-277; the sequence is HSPPL. A helical transmembrane segment spans residues 278-299; it reads YTYLTLLPATYNSMINPIIYAF. Residues 300–330 lie on the Cytoplasmic side of the membrane; it reads RNQDVQKVLWAVCCCCSSSKIPFRSRSPSDV. Residue Cys-313 is the site of S-palmitoyl cysteine attachment. 3 positions are modified to phosphoserine: Ser-324, Ser-326, and Ser-328.

Belongs to the G-protein coupled receptor 1 family. As to expression, expressed predominantly in the central nervous system, and at low levels in the lung, kidney, testis, ovary and eye. Highly expressed in regions of the brain implicated in the Alzheimer disease.

It localises to the cell membrane. Functionally, constitutively active G-protein coupled receptor that maintains high 3'-5'-cyclic adenosine monophosphate (cAMP) levels that a plays a role in serveral processes including meiotic arrest in oocytes or neuronal development via activation of numerous intracellular signaling pathways. Acts as an essential activator of thermogenic adipocytes and drives thermogenesis via its intrinsic G(s)-coupling activity without the requirement of a ligand. Has a potential role in modulating a number of brain functions, including behavioral responses to stress, amyloid-beta peptide generation in neurons. Stimulates neurite outgrowth in cerebellar granular neurons modulated via PKA, ERK, and most strongly PI3K-mediated signaling pathways. The polypeptide is G-protein coupled receptor 3 (GPR3) (Homo sapiens (Human)).